Here is a 326-residue protein sequence, read N- to C-terminus: Lipopolysaccharide heptosyltransferase 1 (326 aa).

ADP contacts are provided by T187, T188, K192, E222, and M242. Positions 187, 188, 192, 222, 242, 261, 262, 263, and 266 each coordinate ADP-L-glycero-beta-D-manno-heptose. 2 residues coordinate ADP: T262 and G263.

This sequence belongs to the glycosyltransferase 9 family. Monomer.

The protein localises to the cell inner membrane. It carries out the reaction an alpha-Kdo-(2-&gt;4)-alpha-Kdo-(2-&gt;6)-lipid A + ADP-L-glycero-beta-D-manno-heptose = an L-alpha-D-Hep-(1-&gt;5)-[alpha-Kdo-(2-&gt;4)]-alpha-Kdo-(2-&gt;6)-lipid A + ADP + H(+). The enzyme catalyses alpha-Kdo-(2-&gt;4)-alpha-Kdo-(2-&gt;6)-lipid A (E. coli) + ADP-L-glycero-beta-D-manno-heptose = L-alpha-D-Hep-(1-&gt;5)-[alpha-Kdo-(2-&gt;4)]-alpha-Kdo-(2-&gt;6)-lipid A (E. coli) + ADP + H(+). It functions in the pathway bacterial outer membrane biogenesis; LPS core biosynthesis. Its activity is regulated as follows. Inhibited by ADP-L-glycero-beta-D-gluco-2-deoxy-2-fluoro-heptose (ADP-2F-heptose), a non-cleavable analog of the substrate ADP-L-glycero-beta-D-manno-heptose. Functionally, glycosyltransferase involved in the biosynthesis of the core oligosaccharide region of lipopolysaccharide (LPS). Catalyzes the addition of the first heptose unit to one 3-deoxy-D-manno-octulosonic acid (Kdo) residue of the Kdo2-lipid A module. This chain is Lipopolysaccharide heptosyltransferase 1, found in Escherichia coli O18:K1:H7 (strain RS218 / NMEC).